The chain runs to 276 residues: Large ribosomal subunit protein uL2 (276 aa).

Disordered stretches follow at residues 1-50 and 206-276; these read MPIK…GRVT and GKAG…SKKR. The span at 7–19 shows a compositional bias: polar residues; it reads RPTTPTRRFQTVV. The span at 20–38 shows a compositional bias: basic and acidic residues; that stretch reads SREDITKQTPEKSLVESKK.

This sequence belongs to the universal ribosomal protein uL2 family. As to quaternary structure, part of the 50S ribosomal subunit. Forms a bridge to the 30S subunit in the 70S ribosome.

One of the primary rRNA binding proteins. Required for association of the 30S and 50S subunits to form the 70S ribosome, for tRNA binding and peptide bond formation. It has been suggested to have peptidyltransferase activity; this is somewhat controversial. Makes several contacts with the 16S rRNA in the 70S ribosome. The polypeptide is Large ribosomal subunit protein uL2 (Solibacter usitatus (strain Ellin6076)).